A 333-amino-acid polypeptide reads, in one-letter code: Adenosine deaminase (333 aa).

2 residues coordinate Zn(2+): His-12 and His-14. Positions 14, 16, and 170 each coordinate substrate. Residue His-197 coordinates Zn(2+). Glu-200 (proton donor) is an active-site residue. Asp-278 contacts Zn(2+). Asp-279 serves as a coordination point for substrate.

The protein belongs to the metallo-dependent hydrolases superfamily. Adenosine and AMP deaminases family. Adenosine deaminase subfamily. It depends on Zn(2+) as a cofactor.

It catalyses the reaction adenosine + H2O + H(+) = inosine + NH4(+). The catalysed reaction is 2'-deoxyadenosine + H2O + H(+) = 2'-deoxyinosine + NH4(+). Its function is as follows. Catalyzes the hydrolytic deamination of adenosine and 2-deoxyadenosine. The protein is Adenosine deaminase of Shigella flexneri serotype 5b (strain 8401).